The sequence spans 363 residues: tRNA(Met) cytidine acetate ligase (363 aa).

ATP contacts are provided by residues 7 to 20 (IAEF…HKYL), G96, N152, and R175.

This sequence belongs to the TmcAL family.

The protein resides in the cytoplasm. It carries out the reaction cytidine(34) in elongator tRNA(Met) + acetate + ATP = N(4)-acetylcytidine(34) in elongator tRNA(Met) + AMP + diphosphate. In terms of biological role, catalyzes the formation of N(4)-acetylcytidine (ac(4)C) at the wobble position of elongator tRNA(Met), using acetate and ATP as substrates. First activates an acetate ion to form acetyladenylate (Ac-AMP) and then transfers the acetyl group to tRNA to form ac(4)C34. This Streptococcus gordonii (strain Challis / ATCC 35105 / BCRC 15272 / CH1 / DL1 / V288) protein is tRNA(Met) cytidine acetate ligase.